The following is a 371-amino-acid chain: DNA replication and repair protein RecF (371 aa).

Gly30–Thr37 provides a ligand contact to ATP.

This sequence belongs to the RecF family.

It localises to the cytoplasm. Its function is as follows. The RecF protein is involved in DNA metabolism; it is required for DNA replication and normal SOS inducibility. RecF binds preferentially to single-stranded, linear DNA. It also seems to bind ATP. In Lacticaseibacillus paracasei (strain ATCC 334 / BCRC 17002 / CCUG 31169 / CIP 107868 / KCTC 3260 / NRRL B-441) (Lactobacillus paracasei), this protein is DNA replication and repair protein RecF.